Consider the following 262-residue polypeptide: Ribosomal RNA small subunit methyltransferase A (262 aa).

6 residues coordinate S-adenosyl-L-methionine: His-16, Leu-18, Gly-43, Glu-64, Asp-89, and Asn-109.

The protein belongs to the class I-like SAM-binding methyltransferase superfamily. rRNA adenine N(6)-methyltransferase family. RsmA subfamily.

The protein localises to the cytoplasm. It carries out the reaction adenosine(1518)/adenosine(1519) in 16S rRNA + 4 S-adenosyl-L-methionine = N(6)-dimethyladenosine(1518)/N(6)-dimethyladenosine(1519) in 16S rRNA + 4 S-adenosyl-L-homocysteine + 4 H(+). Specifically dimethylates two adjacent adenosines (A1518 and A1519) in the loop of a conserved hairpin near the 3'-end of 16S rRNA in the 30S particle. May play a critical role in biogenesis of 30S subunits. This is Ribosomal RNA small subunit methyltransferase A from Xanthomonas axonopodis pv. citri (strain 306).